The primary structure comprises 142 residues: Large ribosomal subunit protein uL11 (142 aa).

Belongs to the universal ribosomal protein uL11 family. In terms of assembly, part of the ribosomal stalk of the 50S ribosomal subunit. Interacts with L10 and the large rRNA to form the base of the stalk. L10 forms an elongated spine to which L12 dimers bind in a sequential fashion forming a multimeric L10(L12)X complex. Post-translationally, one or more lysine residues are methylated.

Forms part of the ribosomal stalk which helps the ribosome interact with GTP-bound translation factors. The chain is Large ribosomal subunit protein uL11 from Mycoplasma capricolum subsp. capricolum (strain California kid / ATCC 27343 / NCTC 10154).